A 130-amino-acid chain; its full sequence is Small ribosomal subunit protein uS11 (130 aa).

This sequence belongs to the universal ribosomal protein uS11 family. In terms of assembly, part of the 30S ribosomal subunit. Interacts with proteins S7 and S18. Binds to IF-3.

Located on the platform of the 30S subunit, it bridges several disparate RNA helices of the 16S rRNA. Forms part of the Shine-Dalgarno cleft in the 70S ribosome. The protein is Small ribosomal subunit protein uS11 of Dehalococcoides mccartyi (strain ATCC BAA-2266 / KCTC 15142 / 195) (Dehalococcoides ethenogenes (strain 195)).